We begin with the raw amino-acid sequence, 208 residues long: Large ribosomal subunit protein bL25 (208 aa).

Residues 1–20 (MANHQIKAQRRKDEGKGASR) are disordered.

Belongs to the bacterial ribosomal protein bL25 family. CTC subfamily. In terms of assembly, part of the 50S ribosomal subunit; part of the 5S rRNA/L5/L18/L25 subcomplex. Contacts the 5S rRNA. Binds to the 5S rRNA independently of L5 and L18.

In terms of biological role, this is one of the proteins that binds to the 5S RNA in the ribosome where it forms part of the central protuberance. The protein is Large ribosomal subunit protein bL25 of Xylella fastidiosa (strain 9a5c).